A 1770-amino-acid chain; its full sequence is Transposon Ty2-C Gag-Pol polyprotein (1770 aa).

Polar residues-rich tracts occupy residues 1 to 11, 19 to 39, and 49 to 60; these read MESQQLHQNPR, ASVT…SASN, and KVNSQQETTPGT. Disordered regions lie at residues 1-88 and 355-453; these read MESQ…YQQH and SQYK…LPDH. An RNA-binding region spans residues 295-397; that stretch reads ENNINVSDRL…SSKPRAAKAH (103 aa). Residues 369-382 show a composition bias toward low complexity; sequence TSPNTTNTKVTTRN. Polar residues-rich tracts occupy residues 399 to 408 and 415 to 435; these read IATSSKFSRV and ESTV…GQQQ. Residue D457 is the For protease activity; shared with dimeric partner of the active site. Residues 579-636 are integrase-type zinc finger-like; that stretch reads NVNKSKSVNKYPYPLIHRMLGHANFRSIQKSLKKNAVTYLKESDIEWSNASTYQCPDC. Positions 656 to 831 constitute an Integrase catalytic domain; the sequence is ESYEPFQYLH…AGLDITTILP (176 aa). Positions 667 and 732 each coordinate Mg(2+). Disordered regions lie at residues 1003–1038 and 1057–1205; these read EMGG…MIDL and GGTE…TEIE. Polar residues-rich tracts occupy residues 1009–1024 and 1065–1082; these read ESDT…FTAR and QRNS…STPS. Residues 1193-1227 carry the Bipartite nuclear localization signal motif; sequence KKRSLEDNETEIEVSRDTWNNKNMRSLEPPRSKKR. Residues 1353–1491 enclose the Reverse transcriptase Ty1/copia-type domain; sequence NDYYITQLDI…DILGLEIKYQ (139 aa). Residues D1361, D1442, D1443, D1625, E1667, and D1700 each coordinate Mg(2+). The region spanning 1625-1767 is the RNase H Ty1/copia-type domain; that stretch reads DASYGNQPYY…IKTFKLLTNK (143 aa).

The capsid protein forms a homotrimer, from which the VLPs are assembled. The protease is a homodimer, whose active site consists of two apposed aspartic acid residues. Initially, virus-like particles (VLPs) are composed of the structural unprocessed proteins Gag and Gag-Pol, and also contain the host initiator methionine tRNA (tRNA(i)-Met) which serves as a primer for minus-strand DNA synthesis, and a dimer of genomic Ty RNA. Processing of the polyproteins occurs within the particle and proceeds by an ordered pathway, called maturation. First, the protease (PR) is released by autocatalytic cleavage of the Gag-Pol polyprotein, and this cleavage is a prerequisite for subsequent processing at the remaining sites to release the mature structural and catalytic proteins. Maturation takes place prior to the RT reaction and is required to produce transposition-competent VLPs.

It localises to the cytoplasm. The protein resides in the nucleus. The catalysed reaction is DNA(n) + a 2'-deoxyribonucleoside 5'-triphosphate = DNA(n+1) + diphosphate. The enzyme catalyses Endonucleolytic cleavage to 5'-phosphomonoester.. Functionally, capsid protein (CA) is the structural component of the virus-like particle (VLP), forming the shell that encapsulates the retrotransposons dimeric RNA genome. The particles are assembled from trimer-clustered units and there are holes in the capsid shells that allow for the diffusion of macromolecules. CA also has nucleocapsid-like chaperone activity, promoting primer tRNA(i)-Met annealing to the multipartite primer-binding site (PBS), dimerization of Ty2 RNA and initiation of reverse transcription. The aspartyl protease (PR) mediates the proteolytic cleavages of the Gag and Gag-Pol polyproteins after assembly of the VLP. In terms of biological role, reverse transcriptase/ribonuclease H (RT) is a multifunctional enzyme that catalyzes the conversion of the retro-elements RNA genome into dsDNA within the VLP. The enzyme displays a DNA polymerase activity that can copy either DNA or RNA templates, and a ribonuclease H (RNase H) activity that cleaves the RNA strand of RNA-DNA heteroduplexes during plus-strand synthesis and hydrolyzes RNA primers. The conversion leads to a linear dsDNA copy of the retrotransposon that includes long terminal repeats (LTRs) at both ends. Its function is as follows. Integrase (IN) targets the VLP to the nucleus, where a subparticle preintegration complex (PIC) containing at least integrase and the newly synthesized dsDNA copy of the retrotransposon must transit the nuclear membrane. Once in the nucleus, integrase performs the integration of the dsDNA into the host genome. The polypeptide is Transposon Ty2-C Gag-Pol polyprotein (TY2B-C) (Saccharomyces cerevisiae (strain ATCC 204508 / S288c) (Baker's yeast)).